The sequence spans 573 residues: Sulfite reductase [NADPH] hemoprotein beta-component (573 aa).

The [4Fe-4S] cluster site is built by C436, C442, C481, and C485. Siroheme is bound at residue C485.

This sequence belongs to the nitrite and sulfite reductase 4Fe-4S domain family. As to quaternary structure, alpha(8)-beta(8). The alpha component is a flavoprotein, the beta component is a hemoprotein. It depends on siroheme as a cofactor. [4Fe-4S] cluster serves as cofactor.

The enzyme catalyses hydrogen sulfide + 3 NADP(+) + 3 H2O = sulfite + 3 NADPH + 4 H(+). The protein operates within sulfur metabolism; hydrogen sulfide biosynthesis; hydrogen sulfide from sulfite (NADPH route): step 1/1. Its function is as follows. Component of the sulfite reductase complex that catalyzes the 6-electron reduction of sulfite to sulfide. This is one of several activities required for the biosynthesis of L-cysteine from sulfate. The sequence is that of Sulfite reductase [NADPH] hemoprotein beta-component from Alteromonas mediterranea (strain DSM 17117 / CIP 110805 / LMG 28347 / Deep ecotype).